Here is a 409-residue protein sequence, read N- to C-terminus: Lactadherin (409 aa).

EGF-like domains are found at residues 2–41 (SGDF…LICN) and 44–88 (EKGP…IHCE). 3 cysteine pairs are disulfide-bonded: cysteine 6/cysteine 17, cysteine 11/cysteine 29, and cysteine 31/cysteine 40. N-linked (GlcNAc...) asparagine glycosylation is present at asparagine 41. Cystine bridges form between cysteine 48-cysteine 59, cysteine 53-cysteine 76, cysteine 78-cysteine 87, cysteine 91-cysteine 247, cysteine 234-cysteine 238, and cysteine 252-cysteine 409. The short motif at 67–69 (RGD) is the Cell attachment site element. 2 F5/8 type C domains span residues 91-247 (CNAP…LLGC) and 252-409 (CAEP…LLGC). Asparagine 372 carries N-linked (GlcNAc...) asparagine glycosylation.

As to expression, mammary epithelial cell surfaces and spermatozoan. Also present in testis, epididymis, uterus, adrenal gland, tonsil, muscle, heart, lymphatic gland, thymus and kidney but not spleen, liver, lung or brain.

It localises to the membrane. It is found in the secreted. The protein localises to the cytoplasmic vesicle. Its subcellular location is the secretory vesicle. The protein resides in the acrosome membrane. Contributes to phagocytic removal of apoptotic cells in many tissues. Plays an important role in the maintenance of intestinal epithelial homeostasis and the promotion of mucosal healing. Promotes VEGF-dependent neovascularization. Specific ligand for the alpha-v/beta-3 and alpha-v/beta-5 receptors. Also binds to phosphatidylserine-enriched cell surfaces in a receptor-independent manner. Zona pellucida-binding protein which may play a role in gamete interaction. This is Lactadherin (MFGE8) from Sus scrofa (Pig).